The primary structure comprises 134 residues: Aspartate 1-decarboxylase (134 aa).

Serine 25 acts as the Schiff-base intermediate with substrate; via pyruvic acid in catalysis. Serine 25 is subject to Pyruvic acid (Ser). Threonine 57 contacts substrate. The Proton donor role is filled by tyrosine 58. A substrate-binding site is contributed by 73–75; the sequence is GAA.

Belongs to the PanD family. Heterooctamer of four alpha and four beta subunits. The cofactor is pyruvate. In terms of processing, is synthesized initially as an inactive proenzyme, which is activated by self-cleavage at a specific serine bond to produce a beta-subunit with a hydroxyl group at its C-terminus and an alpha-subunit with a pyruvoyl group at its N-terminus.

Its subcellular location is the cytoplasm. It carries out the reaction L-aspartate + H(+) = beta-alanine + CO2. Its pathway is cofactor biosynthesis; (R)-pantothenate biosynthesis; beta-alanine from L-aspartate: step 1/1. In terms of biological role, catalyzes the pyruvoyl-dependent decarboxylation of aspartate to produce beta-alanine. In Geobacter sp. (strain M21), this protein is Aspartate 1-decarboxylase.